The sequence spans 273 residues: Tryptophan synthase alpha chain (273 aa).

Residues Glu56 and Asp67 each act as proton acceptor in the active site.

Belongs to the TrpA family. In terms of assembly, tetramer of two alpha and two beta chains.

The enzyme catalyses (1S,2R)-1-C-(indol-3-yl)glycerol 3-phosphate + L-serine = D-glyceraldehyde 3-phosphate + L-tryptophan + H2O. The protein operates within amino-acid biosynthesis; L-tryptophan biosynthesis; L-tryptophan from chorismate: step 5/5. Functionally, the alpha subunit is responsible for the aldol cleavage of indoleglycerol phosphate to indole and glyceraldehyde 3-phosphate. The chain is Tryptophan synthase alpha chain from Shewanella baltica (strain OS185).